A 111-amino-acid polypeptide reads, in one-letter code: Universal stress protein B (111 aa).

2 helical membrane-spanning segments follow: residues 1-21 (MIST…NMAR) and 90-110 (FILT…LILW).

The protein belongs to the universal stress protein B family.

The protein resides in the cell inner membrane. This Yersinia enterocolitica serotype O:8 / biotype 1B (strain NCTC 13174 / 8081) protein is Universal stress protein B.